We begin with the raw amino-acid sequence, 307 residues long: Ribonuclease Z (307 aa).

His-63, His-65, Asp-67, His-68, His-141, Asp-212, and His-270 together coordinate Zn(2+). Asp-67 serves as the catalytic Proton acceptor.

It belongs to the RNase Z family. In terms of assembly, homodimer. Requires Zn(2+) as cofactor.

It catalyses the reaction Endonucleolytic cleavage of RNA, removing extra 3' nucleotides from tRNA precursor, generating 3' termini of tRNAs. A 3'-hydroxy group is left at the tRNA terminus and a 5'-phosphoryl group is left at the trailer molecule.. Zinc phosphodiesterase, which displays some tRNA 3'-processing endonuclease activity. Probably involved in tRNA maturation, by removing a 3'-trailer from precursor tRNA. The polypeptide is Ribonuclease Z (Bacillus mycoides (strain KBAB4) (Bacillus weihenstephanensis)).